Consider the following 147-residue polypeptide: C-glycoside deglycosidase beta subunit (147 aa).

The protein belongs to the C-glycoside deglycosidase beta subunit family. As to quaternary structure, heterooctamer composed of four alpha subunits (DfgA) and four beta subunits (DfgB). Mn(2+) is required as a cofactor.

The catalysed reaction is 3''-dehydroisoorientin = 1,5-anhydro-D-erythro-hex-1-en-3-ulose + luteolin. The enzyme catalyses 3''-dehydroisovitexin = 1,5-anhydro-D-erythro-hex-1-en-3-ulose + apigenin. Its activity is regulated as follows. Activity is strongly reduced in the presence of chelating agents. Its function is as follows. Carbon-carbon bond-cleaving enzyme which participates in the metabolism of C-glycosides. Acts on the C6-glycosylated compounds 3''-dehydroisoorientin (3''-oxo-homoorientin) and 3''-dehydroisovitexin (3''-oxo-isovitexin). The chain is C-glycoside deglycosidase beta subunit from Eubacterium cellulosolvens (strain ATCC 43171 / JCM 9499 / 6) (Cillobacterium cellulosolvens).